The following is a 488-amino-acid chain: MTLRFYDTASAEVRNFVPLVAGRASLYYCGATVQGMPHVGHIRSAIAFDQLTRWLTHRGLRVTVVRNVTDIDDKILAKSEASFASGFQPEPGEIPGEEWWALAYRYEQEFLKAYDALGVSRPTYEPRATGHIPEMHALIQQLIDRGHAYPALDDSGDVYFDVRSWSKYGALTRQNIDDMQAAADADPRGKRDPRDFALWKGSKEGEPATASWASPWGAGRPGWHLECSAMVTKYLGTEFDIHGGGLDLRFPHHENEMAQSQAAGHPFANFWMHNGMVTYEGEKMSKSIGNTISPAEMLELASPRVVRYYLGQAHYRSILDYRPTSLQEAAAAVERIDGFLAKAVARFGTDFGFVEGDYGPSTGAVEAFYAAMDDDLNVPRALAALHETVRAGNTALADGDDDSARKAMNAVVIMTDVLGLNAVAGSEKTSTREAEALAVLVEAQLAARATARAEKDWSASDAIRDTLNEAGVVVEDGADGPTWSLKRD.

Cys29 provides a ligand contact to Zn(2+). The 'HIGH' region motif lies at 31 to 41 (ATVQGMPHVGH). The Zn(2+) site is built by Cys227, His252, and Glu256. A 'KMSKS' region motif is present at residues 283–287 (KMSKS). ATP is bound at residue Lys286.

This sequence belongs to the class-I aminoacyl-tRNA synthetase family. Monomer. Zn(2+) is required as a cofactor.

The protein localises to the cytoplasm. The catalysed reaction is tRNA(Cys) + L-cysteine + ATP = L-cysteinyl-tRNA(Cys) + AMP + diphosphate. This chain is Cysteine--tRNA ligase, found in Pseudarthrobacter chlorophenolicus (strain ATCC 700700 / DSM 12829 / CIP 107037 / JCM 12360 / KCTC 9906 / NCIMB 13794 / A6) (Arthrobacter chlorophenolicus).